The following is a 394-amino-acid chain: Cell division protein FtsZ (394 aa).

GTP contacts are provided by residues 21–25, 108–110, glutamate 139, arginine 143, and aspartate 187; these read GGGGN and GTG.

It belongs to the FtsZ family. As to quaternary structure, homodimer. Polymerizes to form a dynamic ring structure in a strictly GTP-dependent manner. Interacts directly with several other division proteins.

The protein resides in the cytoplasm. Essential cell division protein that forms a contractile ring structure (Z ring) at the future cell division site. The regulation of the ring assembly controls the timing and the location of cell division. One of the functions of the FtsZ ring is to recruit other cell division proteins to the septum to produce a new cell wall between the dividing cells. Binds GTP and shows GTPase activity. The chain is Cell division protein FtsZ from Azotobacter vinelandii.